Here is a 382-residue protein sequence, read N- to C-terminus: Chaperone protein DnaJ (382 aa).

A J domain is found at 5–69; it reads DLYGVLGVAK…QKRANYDQSG (65 aa). Residues 104–123 are disordered; the sequence is QFFGGGGGQRNPNAPRPGRD. The segment at 138–220 adopts a CR-type zinc-finger fold; the sequence is GKKTKIKYNR…CGGSGHEEER (83 aa). Zn(2+) contacts are provided by Cys151, Cys154, Cys168, Cys171, Cys194, Cys197, Cys208, and Cys211. CXXCXGXG motif repeat units follow at residues 151 to 158, 168 to 175, 194 to 201, and 208 to 215; these read CHTCGGNG, CHQCGGSG, CPVCHGTG, and CPTCGGSG. A disordered region spans residues 358-382; it reads ASGESVTGSGKGNLFNKMRDKFNEN.

This sequence belongs to the DnaJ family. As to quaternary structure, homodimer. It depends on Zn(2+) as a cofactor.

Its subcellular location is the cytoplasm. In terms of biological role, participates actively in the response to hyperosmotic and heat shock by preventing the aggregation of stress-denatured proteins and by disaggregating proteins, also in an autonomous, DnaK-independent fashion. Unfolded proteins bind initially to DnaJ; upon interaction with the DnaJ-bound protein, DnaK hydrolyzes its bound ATP, resulting in the formation of a stable complex. GrpE releases ADP from DnaK; ATP binding to DnaK triggers the release of the substrate protein, thus completing the reaction cycle. Several rounds of ATP-dependent interactions between DnaJ, DnaK and GrpE are required for fully efficient folding. Also involved, together with DnaK and GrpE, in the DNA replication of plasmids through activation of initiation proteins. The chain is Chaperone protein DnaJ from Levilactobacillus brevis (strain ATCC 367 / BCRC 12310 / CIP 105137 / JCM 1170 / LMG 11437 / NCIMB 947 / NCTC 947) (Lactobacillus brevis).